A 180-amino-acid chain; its full sequence is MSNKYSLNDDELQLFRTSITGTKKLRQDTYTHKPLRRKIGELPAKRALQEQVDASFYFSDEFQPQLDAEGPTRYVRPGASHYELKKLRRGDYSPELFLDLHGLTQLQAKQELGALLAACRREHVYCACVMHGHGKHILKQQTPLWLAQHPDVLAFHQAPKEFGGNAALLVLVALEAPSLE.

In terms of domain architecture, Smr spans 98–173 (LDLHGLTQLQ…GNAALLVLVA (76 aa)).

The protein belongs to the SmrB family. As to quaternary structure, associates with collided ribosomes, but not with correctly translating polysomes.

Acts as a ribosome collision sensor. Detects stalled/collided disomes (pairs of ribosomes where the leading ribosome is stalled and a second ribosome has collided with it) and endonucleolytically cleaves mRNA at the 5' boundary of the stalled ribosome. Stalled/collided disomes form a new interface (primarily via the 30S subunits) that binds SmrB. Cleaved mRNA becomes available for tmRNA ligation, leading to ribosomal subunit dissociation and rescue of stalled ribosomes. This Pectobacterium carotovorum subsp. carotovorum (strain PC1) protein is Ribosome rescue factor SmrB.